A 286-amino-acid polypeptide reads, in one-letter code: MSYVITDETKLTGIIGRPIKQSFSPKIHNGAFQYLNLNYIYIPFEVVQQDLSKTVEAMKVLKFRGFNVTMPHKREVMNYLDEVSENAKIIGAVNTVVNQNGKLVGHNTDGKGYVQSLEDEGIYVKEKTFVIAGAGGAARSVAVQLALDGAKKITILNRTIDKAHDIAQLIGMSIPNVHIEINCLENKTLAKAVEEADVLINTTSLGMYSMEEESIIGEEKVLPSNLVVSDLIYNPAKTKLLQQAESRGCKTINGLGMLIGQAAIAFELWTEVAMPIDYIKKTLFTR.

Residues 22–24 (SFS) and Thr69 each bind shikimate. Lys73 functions as the Proton acceptor in the catalytic mechanism. Glu85 provides a ligand contact to NADP(+). Shikimate contacts are provided by Asn94 and Asp109. NADP(+)-binding positions include 133-137 (GAGGA), 157-162 (NRTIDK), and Leu231. Tyr233 contacts shikimate. Residue Gly254 coordinates NADP(+).

It belongs to the shikimate dehydrogenase family. Homodimer.

The enzyme catalyses shikimate + NADP(+) = 3-dehydroshikimate + NADPH + H(+). It functions in the pathway metabolic intermediate biosynthesis; chorismate biosynthesis; chorismate from D-erythrose 4-phosphate and phosphoenolpyruvate: step 4/7. Involved in the biosynthesis of the chorismate, which leads to the biosynthesis of aromatic amino acids. Catalyzes the reversible NADPH linked reduction of 3-dehydroshikimate (DHSA) to yield shikimate (SA). The protein is Shikimate dehydrogenase (NADP(+)) of Alkaliphilus oremlandii (strain OhILAs) (Clostridium oremlandii (strain OhILAs)).